A 131-amino-acid chain; its full sequence is Large-conductance mechanosensitive channel (131 aa).

The next 2 membrane-spanning stretches (helical) occupy residues 21–41 (VGVIIGGAFGKIVSSLVADVI) and 76–96 (GMFIQNIFDFIIIAFAIFLMI).

This sequence belongs to the MscL family. In terms of assembly, homopentamer.

It is found in the cell inner membrane. Channel that opens in response to stretch forces in the membrane lipid bilayer. May participate in the regulation of osmotic pressure changes within the cell. The polypeptide is Large-conductance mechanosensitive channel (Histophilus somni (strain 129Pt) (Haemophilus somnus)).